A 58-amino-acid chain; its full sequence is Small integral membrane protein 11 (58 aa).

The chain crosses the membrane as a helical span at residues 9 to 29 (FPLLLYILAAKTLILCLAFAG). A coiled-coil region spans residues 29–58 (GVKVYQRKRLEAKQQKVEAEKRKQAEKKES).

Its subcellular location is the membrane. This chain is Small integral membrane protein 11 (SMIM11), found in Bos taurus (Bovine).